Consider the following 147-residue polypeptide: Small ribosomal subunit protein uS12 (147 aa).

The protein belongs to the universal ribosomal protein uS12 family. As to quaternary structure, part of the 30S ribosomal subunit.

With S4 and S5 plays an important role in translational accuracy. Located at the interface of the 30S and 50S subunits. The protein is Small ribosomal subunit protein uS12 of Ignicoccus hospitalis (strain KIN4/I / DSM 18386 / JCM 14125).